The following is a 259-amino-acid chain: Phosphatidylglycerol--prolipoprotein diacylglyceryl transferase (259 aa).

A run of 4 helical transmembrane segments spans residues isoleucine 9–isoleucine 29, phenylalanine 55–tyrosine 75, glutamate 92–cysteine 112, and isoleucine 117–glycine 137. Arginine 138 is an a 1,2-diacyl-sn-glycero-3-phospho-(1'-sn-glycerol) binding site. 3 helical membrane-spanning segments follow: residues glutamine 172–phenylalanine 192, glycine 201–phenylalanine 221, and isoleucine 228–leucine 248.

Belongs to the Lgt family.

The protein localises to the cell inner membrane. It catalyses the reaction L-cysteinyl-[prolipoprotein] + a 1,2-diacyl-sn-glycero-3-phospho-(1'-sn-glycerol) = an S-1,2-diacyl-sn-glyceryl-L-cysteinyl-[prolipoprotein] + sn-glycerol 1-phosphate + H(+). It functions in the pathway protein modification; lipoprotein biosynthesis (diacylglyceryl transfer). Functionally, catalyzes the transfer of the diacylglyceryl group from phosphatidylglycerol to the sulfhydryl group of the N-terminal cysteine of a prolipoprotein, the first step in the formation of mature lipoproteins. This Rickettsia africae (strain ESF-5) protein is Phosphatidylglycerol--prolipoprotein diacylglyceryl transferase.